The sequence spans 302 residues: tRNA pseudouridine synthase B (302 aa).

D45 (nucleophile) is an active-site residue.

The protein belongs to the pseudouridine synthase TruB family. Type 1 subfamily.

It catalyses the reaction uridine(55) in tRNA = pseudouridine(55) in tRNA. Functionally, responsible for synthesis of pseudouridine from uracil-55 in the psi GC loop of transfer RNAs. The sequence is that of tRNA pseudouridine synthase B from Francisella tularensis subsp. novicida (strain U112).